The following is a 100-amino-acid chain: Putative pterin-4-alpha-carbinolamine dehydratase (100 aa).

The protein belongs to the pterin-4-alpha-carbinolamine dehydratase family.

It carries out the reaction (4aS,6R)-4a-hydroxy-L-erythro-5,6,7,8-tetrahydrobiopterin = (6R)-L-erythro-6,7-dihydrobiopterin + H2O. The polypeptide is Putative pterin-4-alpha-carbinolamine dehydratase (Alteromonas mediterranea (strain DSM 17117 / CIP 110805 / LMG 28347 / Deep ecotype)).